Here is a 361-residue protein sequence, read N- to C-terminus: Peptide chain release factor 1 (361 aa).

Gln237 bears the N5-methylglutamine mark. A disordered region spans residues Gln285 to Ser306.

Belongs to the prokaryotic/mitochondrial release factor family. Methylated by PrmC. Methylation increases the termination efficiency of RF1.

The protein resides in the cytoplasm. Peptide chain release factor 1 directs the termination of translation in response to the peptide chain termination codons UAG and UAA. This is Peptide chain release factor 1 from Alkalilimnicola ehrlichii (strain ATCC BAA-1101 / DSM 17681 / MLHE-1).